Reading from the N-terminus, the 764-residue chain is 5-methyltetrahydropteroyltriglutamate--homocysteine methyltransferase (764 aa).

5-methyltetrahydropteroyltri-L-glutamate is bound by residues 16-19 (RELK) and Lys-117. L-homocysteine is bound by residues 442–444 (IGS) and Glu-495. Residues 442–444 (IGS) and Glu-495 contribute to the L-methionine site. Residues 526–527 (RC) and Trp-572 contribute to the 5-methyltetrahydropteroyltri-L-glutamate site. Asp-610 contributes to the L-homocysteine binding site. Asp-610 lines the L-methionine pocket. Glu-616 provides a ligand contact to 5-methyltetrahydropteroyltri-L-glutamate. The Zn(2+) site is built by His-652, Cys-654, and Glu-676. His-705 functions as the Proton donor in the catalytic mechanism. Cys-737 lines the Zn(2+) pocket.

This sequence belongs to the vitamin-B12 independent methionine synthase family. Requires Zn(2+) as cofactor.

The enzyme catalyses 5-methyltetrahydropteroyltri-L-glutamate + L-homocysteine = tetrahydropteroyltri-L-glutamate + L-methionine. It participates in amino-acid biosynthesis; L-methionine biosynthesis via de novo pathway; L-methionine from L-homocysteine (MetE route): step 1/1. Functionally, catalyzes the transfer of a methyl group from 5-methyltetrahydrofolate to homocysteine resulting in methionine formation. The polypeptide is 5-methyltetrahydropteroyltriglutamate--homocysteine methyltransferase (Bordetella petrii (strain ATCC BAA-461 / DSM 12804 / CCUG 43448)).